The sequence spans 514 residues: MARVTLVLRYAARSDRGLVRANNEDSVYAGARLLALADGMGGHAAGEVASQLVIAALAHLDDDEPGGDLLAKLDAAVRAGNSAIAAQVEMEPDLEGMGTTLTAILFAGNRLGLVHIGDSRGYLLRDGELTQITKDDTFVQTLVDEGRITPEEAHSHPQRSLIMRALTGHEVEPTLTMREARAGDRYLLCSDGLSDPVSDETILEALQIPEVAESAHRLIELALRGGGPDNVTVVVADVVDYDYGQTQPILAGAVSGDDDQLTLPNTAAGRASAISQRKEIVKRVPPQADTFSRPRWSGRRLAFVVALVTVLMTAGLLIGRAIIRSNYYVADYAGSVSIMRGIQGSLLGMSLHQPYLMGCLSPRNELSQISYGQSGGPLDCHLMKLEDLRPPERAQVRAGLPAGTLDDAIGQLRELAANSLLPPCPAPRATSPPGRPAPPTTSETTEPNVTSSPASPSPTTSASAPTGTTPAIPTSASPAAPASPPTPWPVTSSPTMAALPPPPPQPGIDCRAAA.

Residues 1 to 302 (MARVTLVLRY…RPRWSGRRLA (302 aa)) lie on the Cytoplasmic side of the membrane. The PPM-type phosphatase domain occupies 9–238 (RYAARSDRGL…DNVTVVVADV (230 aa)). Mn(2+) is bound by residues Asp38, Gly39, Asp118, Ser160, Asp191, and Asp229. The helical transmembrane segment at 303–323 (FVVALVTVLMTAGLLIGRAII) threads the bilayer. Residues 324–514 (RSNYYVADYA…QPGIDCRAAA (191 aa)) lie on the Extracellular side of the membrane. The disordered stretch occupies residues 420–514 (LLPPCPAPRA…QPGIDCRAAA (95 aa)). The segment covering 440-480 (TTSETTEPNVTSSPASPSPTTSASAPTGTTPAIPTSASPAA) has biased composition (low complexity).

The cofactor is Mn(2+).

Its subcellular location is the cell membrane. The enzyme catalyses O-phospho-L-seryl-[protein] + H2O = L-seryl-[protein] + phosphate. The catalysed reaction is O-phospho-L-threonyl-[protein] + H2O = L-threonyl-[protein] + phosphate. Its function is as follows. Plays an important role in regulating cell division and growth by reversible phosphorylation signaling. May play important roles in regulating cellular metabolism and signaling pathways, which could mediate the growth and development of the cell. Plays a role in establishing and maintaining infection. The protein is Serine/threonine protein phosphatase PstP (pstP) of Mycobacterium tuberculosis (strain CDC 1551 / Oshkosh).